A 194-amino-acid chain; its full sequence is MKSVASPLCQFHGVFCLYQCRQCLAYHVCDGGAECVLLHTPESVICELTGNCMLGNIQEGQFLGPVPYRTLDNQVDRDAYHGMLACLKRDIVRYLQTWPDTTVIVQEIALGDGVTDTISAIIDETFGECLPVLGEAQGGYALVCSMYLHVIVSIYSTKTVYNSMLFKCTKNKKYDCIAKRVRTKWMRMLSTKDT.

Residues 1–25 form the signal peptide; it reads MKSVASPLCQFHGVFCLYQCRQCLA.

This sequence belongs to the herpesviridae UL92 family. As to quaternary structure, interacts with ORF34.

Its subcellular location is the host nucleus. The protein resides in the host cytoplasm. Plays an important role in the expression of late genes. May play a role in viral replication. This Homo sapiens (Human) protein is Protein ORF31 (ORF31).